The primary structure comprises 160 residues: Cyanate hydratase (160 aa).

Catalysis depends on residues Arg-100, Glu-103, and Ser-126.

The protein belongs to the cyanase family.

It carries out the reaction cyanate + hydrogencarbonate + 3 H(+) = NH4(+) + 2 CO2. Catalyzes the reaction of cyanate with bicarbonate to produce ammonia and carbon dioxide. This Aspergillus oryzae (strain ATCC 42149 / RIB 40) (Yellow koji mold) protein is Cyanate hydratase.